Reading from the N-terminus, the 306-residue chain is Dihydroorotate dehydrogenase B (NAD(+)), catalytic subunit (306 aa).

FMN is bound by residues S22 and 46–47 (KT). Substrate contacts are provided by residues K46, 70 to 74 (NSIGL), and N128. FMN is bound at residue N128. C131 (nucleophile) is an active-site residue. K164 contacts FMN. 191–192 (NT) is a substrate binding site. FMN contacts are provided by residues G216, 242 to 243 (GG), and 264 to 265 (GS).

It belongs to the dihydroorotate dehydrogenase family. Type 1 subfamily. As to quaternary structure, heterotetramer of 2 PyrK and 2 PyrD type B subunits. Requires FMN as cofactor.

The protein resides in the cytoplasm. The enzyme catalyses (S)-dihydroorotate + NAD(+) = orotate + NADH + H(+). The protein operates within pyrimidine metabolism; UMP biosynthesis via de novo pathway; orotate from (S)-dihydroorotate (NAD(+) route): step 1/1. Functionally, catalyzes the conversion of dihydroorotate to orotate with NAD(+) as electron acceptor. In Endomicrobium trichonymphae, this protein is Dihydroorotate dehydrogenase B (NAD(+)), catalytic subunit (pyrD).